The primary structure comprises 79 residues: Quinohemoprotein amine dehydrogenase subunit gamma (79 aa).

The segment at residues 7–16 (CTATTDPGWE) is a cross-link (4-cysteinyl-glutamic acid (Cys-Glu)). Cross-links (3-cysteinyl-aspartic acid (Cys-Asp)) lie at residues 27–33 (CQPMEAD) and 41–49 (CWWPAQVPD). Residue aspartate 33 is the Proton acceptor of the active site. The 4'-cysteinyl-tryptophylquinone (Cys-Trp) cross-link spans 37-43 (CSDPCWW). At tryptophan 43 the chain carries Tryptophylquinone.

This sequence belongs to the quinohemoprotein amine dehydrogenase subunit gamma family. In terms of assembly, heterotrimer of an alpha, a beta and a gamma subunit. It depends on cysteine tryptophylquinone residue as a cofactor. Post-translationally, the cysteine tryptophylquinone (CTQ) is generated by oxidation of the indole ring of a tryptophan residue to form tryptophylquinone, followed by covalent cross-linking with a cysteine residue.

The protein resides in the periplasm. The catalysed reaction is an aliphatic amine + A + H2O = an aldehyde + AH2 + NH4(+). Functionally, catalyzes the oxidative deamination of a wide range of aliphatic monoamines and diamines. The physiological electron acceptor is an azurin-like blue protein. The polypeptide is Quinohemoprotein amine dehydrogenase subunit gamma (qhnDH) (Pseudomonas putida (strain ATCC 47054 / DSM 6125 / CFBP 8728 / NCIMB 11950 / KT2440)).